A 504-amino-acid polypeptide reads, in one-letter code: Endosomal/lysosomal proton channel TMEM175 (504 aa).

Residues methionine 1–glycine 27 form a disordered region. The Cytoplasmic portion of the chain corresponds to methionine 1 to serine 33. Threonine 6 is subject to Phosphothreonine. A helical membrane pass occupies residues glutamine 34–threonine 56. The RxxxFSD motif 1 motif lies at arginine 35–aspartate 41. The Lumenal segment spans residues histidine 57–arginine 77. A short helix H1-1 region spans residues threonine 58–glutamate 63. A short helix H2-1 region spans residues glutamine 65–glutamine 71. A helical membrane pass occupies residues isoleucine 78 to glutamine 100. At valine 101–aspartate 106 the chain is on the cytoplasmic side. Residues aspartate 107–serine 128 form a helical membrane-spanning segment. Residues leucine 129 to leucine 138 are Lumenal-facing. A helical membrane pass occupies residues glycine 139–tyrosine 160. Over alanine 161–histidine 184 the chain is Cytoplasmic. The helical transmembrane segment at valine 185 to phenylalanine 205 threads the bilayer. Topologically, residues phenylalanine 206–serine 210 are lumenal. The chain crosses the membrane as a helical span at residues tyrosine 211–cysteine 230. At arginine 231–serine 257 the chain is on the cytoplasmic side. Residues lysine 258–glutamate 282 form a helical membrane-spanning segment. The RxxxFSD motif 2 motif lies at arginine 260–aspartate 266. At aspartate 283–arginine 309 the chain is on the lumenal side. Residues proline 288–serine 296 are short helix H1-2. The interval serine 298–serine 304 is short helix H2-2. The chain crosses the membrane as a helical span at residues phenylalanine 310–leucine 332. The Cytoplasmic segment spans residues histidine 333–threonine 338. The chain crosses the membrane as a helical span at residues arginine 339–glutamine 360. Residues glutamine 361–arginine 375 lie on the Lumenal side of the membrane. The helical transmembrane segment at valine 376 to threonine 396 threads the bilayer. Topologically, residues alanine 397–histidine 416 are cytoplasmic. A helical membrane pass occupies residues valine 417 to leucine 440. Residues serine 441–arginine 442 are Lumenal-facing. The chain crosses the membrane as a helical span at residues phenylalanine 443–alanine 469. At leucine 470–cysteine 504 the chain is on the cytoplasmic side. Positions glutamate 483–cysteine 504 are disordered. Positions aspartate 493–cysteine 504 are enriched in polar residues.

Belongs to the TMEM175 family. In terms of assembly, homodimer. Interacts with AKT (AKT1, AKT2 or AKT3); leading to formation of the lysoK(GF) complex, which activates the channel. Interacts with LAMP1; inhibiting the proton channel activity of TMEM175. Interacts with LAMP2; inhibiting the proton channel activity of TMEM175. As to expression, widely expressed.

It is found in the endosome membrane. It localises to the lysosome membrane. The enzyme catalyses H(+)(in) = H(+)(out). It carries out the reaction K(+)(in) = K(+)(out). Its activity is regulated as follows. Active at low pH (under pH 4.6): proton channel activity is activated by luminal side protons. Polyunsaturated fatty acids, such as arachidonic acid, also activate the channel activity. Proton channel activity is directly inhibited by LAMP1 or LAMP2, facilitating lysosomal acidification. Channel activity is activated following interaction with AKT (AKT1, AKT2 or AKT3): interaction promotes activation from closed to an open state. Activation by AKT is independent of AKT serine/threonine-protein kinase activity. Proton-activated proton channel that catalyzes proton efflux from endosomes and lysosomes to maintain a steady-state pH. Activated at low pH (under pH 4.6) by luminal side protons: selectively mediates lysosomal proton release from lysosomes, eliciting a proton leak that balances V-ATPase activity to maintain pH homeostasis. Regulation of lumenal pH stability is required for autophagosome-lysosome fusion. Also acts as a potassium channel at higher pH, regulating potassium conductance in endosomes and lysosomes. Constitutes the pore-forming subunit of the lysoK(GF) complex, a complex activated by extracellular growth factors. The lysoK(GF) complex is composed of TMEM175 and AKT (AKT1, AKT2 or AKT3), a major target of growth factor receptors: in the complex, TMEM175 channel is opened by conformational changes by AKT, leading to its activation. The lysoK(GF) complex is required to protect neurons against stress-induced damage. The sequence is that of Endosomal/lysosomal proton channel TMEM175 from Homo sapiens (Human).